We begin with the raw amino-acid sequence, 645 residues long: 1,4-alpha-glucan branching enzyme GlgB (645 aa).

Asp-309 acts as the Nucleophile in catalysis. The active-site Proton donor is Glu-352. The tract at residues 619-645 is disordered; that stretch reads VKTRKGSKKQDGSKTKVRSNVTSRGKR. Polar residues predominate over residues 636–645; it reads RSNVTSRGKR.

This sequence belongs to the glycosyl hydrolase 13 family. GlgB subfamily. Monomer.

It carries out the reaction Transfers a segment of a (1-&gt;4)-alpha-D-glucan chain to a primary hydroxy group in a similar glucan chain.. It participates in glycan biosynthesis; glycogen biosynthesis. Catalyzes the formation of the alpha-1,6-glucosidic linkages in glycogen by scission of a 1,4-alpha-linked oligosaccharide from growing alpha-1,4-glucan chains and the subsequent attachment of the oligosaccharide to the alpha-1,6 position. This is 1,4-alpha-glucan branching enzyme GlgB from Bacillus cereus (strain B4264).